The sequence spans 121 residues: Large ribosomal subunit protein eL18 (121 aa).

The protein belongs to the eukaryotic ribosomal protein eL18 family.

In Methanosphaerula palustris (strain ATCC BAA-1556 / DSM 19958 / E1-9c), this protein is Large ribosomal subunit protein eL18.